Consider the following 44-residue polypeptide: Small, acid-soluble spore protein P (44 aa).

Residues 1-44 form a disordered region; sequence MSHTMGKNNREAKEKKGQPEPLSGSHKVKNRNHSRQKHHAHHDM. Positions 8–18 are enriched in basic and acidic residues; the sequence is NNREAKEKKGQ. The segment covering 26-44 has biased composition (basic residues); it reads HKVKNRNHSRQKHHAHHDM.

Belongs to the SspP family.

The protein localises to the spore core. In Bacillus cereus (strain ATCC 14579 / DSM 31 / CCUG 7414 / JCM 2152 / NBRC 15305 / NCIMB 9373 / NCTC 2599 / NRRL B-3711), this protein is Small, acid-soluble spore protein P.